The primary structure comprises 318 residues: NADH-ubiquinone oxidoreductase chain 1 (318 aa).

Transmembrane regions (helical) follow at residues 3–23, 69–89, 100–120, 135–155, 171–191, 213–233, 253–273, and 294–314; these read TTNI…LTLV, FMFT…WIPL, LGIL…LWSG, AVAQ…SLVL, HMWL…STLA, VEYA…NIIL, ELHT…FLWI, and LPLT…FASI.

It belongs to the complex I subunit 1 family.

The protein localises to the mitochondrion inner membrane. It catalyses the reaction a ubiquinone + NADH + 5 H(+)(in) = a ubiquinol + NAD(+) + 4 H(+)(out). Core subunit of the mitochondrial membrane respiratory chain NADH dehydrogenase (Complex I) that is believed to belong to the minimal assembly required for catalysis. Complex I functions in the transfer of electrons from NADH to the respiratory chain. The immediate electron acceptor for the enzyme is believed to be ubiquinone. In Choloepus didactylus (Southern two-toed sloth), this protein is NADH-ubiquinone oxidoreductase chain 1 (MT-ND1).